A 358-amino-acid polypeptide reads, in one-letter code: Nuclear receptor subfamily 1 group I member 3 (358 aa).

Positions 18–93 (PRNCVVCGDR…VGMRKDMILS (76 aa)) form a DNA-binding region, nuclear receptor. An NR C4-type zinc finger spans residues 21-41 (CVVCGDRATGYHFHALTCEGC). T48 carries the phosphothreonine; by PKC modification. The segment at 57–81 (CPFAGRCEVSKAQRRHCPACRLQKC) adopts an NR C4-type zinc-finger fold. Residues 119–358 (QQKELVQILL…MTPLLGEICS (240 aa)) enclose the NR LBD domain.

Belongs to the nuclear hormone receptor family. NR1 subfamily. As to quaternary structure, heterodimer of NR1I3 and RXR. Interacts with PSMC4. Interacts with ECT2. Directly interacts with DNAJC7; this complex may also include HSP90. Interacts with CRY1. Interacts with CRY2 in a ligand-dependent manner. Phosphorylated at Thr-48 by PKC, dephosphorylation of Thr-48 is required for nuclear translocation and activation. As to expression, predominantly expressed in liver.

The protein localises to the nucleus. It localises to the cytoplasm. The protein resides in the cytoskeleton. Its function is as follows. Binds and transactivates the retinoic acid response elements that control expression of the retinoic acid receptor beta 2 and alcohol dehydrogenase 3 genes. Transactivates both the phenobarbital responsive element module of the human CYP2B6 gene and the CYP3A4 xenobiotic response element. The sequence is that of Nuclear receptor subfamily 1 group I member 3 (Nr1i3) from Mus musculus (Mouse).